Consider the following 209-residue polypeptide: Yop proteins translocation protein K (209 aa).

In terms of biological role, belongs to an operon involved in the translocation of Yop proteins across the bacterial membranes or in the specific control of this function. The chain is Yop proteins translocation protein K (yscK) from Yersinia enterocolitica.